A 431-amino-acid polypeptide reads, in one-letter code: Glutamyl-tRNA(Gln) amidotransferase subunit A (431 aa).

Catalysis depends on charge relay system residues lysine 55 and serine 130. Serine 154 functions as the Acyl-ester intermediate in the catalytic mechanism.

The protein belongs to the amidase family. GatA subfamily. Heterotrimer of A, B and C subunits.

It carries out the reaction L-glutamyl-tRNA(Gln) + L-glutamine + ATP + H2O = L-glutaminyl-tRNA(Gln) + L-glutamate + ADP + phosphate + H(+). Its function is as follows. Allows the formation of correctly charged Gln-tRNA(Gln) through the transamidation of misacylated Glu-tRNA(Gln) in organisms which lack glutaminyl-tRNA synthetase. The reaction takes place in the presence of glutamine and ATP through an activated gamma-phospho-Glu-tRNA(Gln). The sequence is that of Glutamyl-tRNA(Gln) amidotransferase subunit A from Methanococcus maripaludis (strain DSM 14266 / JCM 13030 / NBRC 101832 / S2 / LL).